Consider the following 403-residue polypeptide: S-adenosylmethionine synthase (403 aa).

Residue H17 participates in ATP binding. D19 is a Mg(2+) binding site. E45 is a binding site for K(+). L-methionine is bound by residues E58 and Q104. Residues 104–114 (QSPDIAQGVDT) form a flexible loop region. Residues 179–181 (DGK), 250–251 (KF), D259, 265–266 (RK), A282, and K286 each bind ATP. D259 is a binding site for L-methionine. An L-methionine-binding site is contributed by K290.

The protein belongs to the AdoMet synthase family. As to quaternary structure, homotetramer; dimer of dimers. Requires Mg(2+) as cofactor. The cofactor is K(+).

It is found in the cytoplasm. The enzyme catalyses L-methionine + ATP + H2O = S-adenosyl-L-methionine + phosphate + diphosphate. The protein operates within amino-acid biosynthesis; S-adenosyl-L-methionine biosynthesis; S-adenosyl-L-methionine from L-methionine: step 1/1. In terms of biological role, catalyzes the formation of S-adenosylmethionine (AdoMet) from methionine and ATP. The overall synthetic reaction is composed of two sequential steps, AdoMet formation and the subsequent tripolyphosphate hydrolysis which occurs prior to release of AdoMet from the enzyme. The protein is S-adenosylmethionine synthase of Mycobacterium avium (strain 104).